Reading from the N-terminus, the 545-residue chain is Bifunctional purine biosynthesis protein PurH (545 aa).

Residues 1-150 (MTNTNRPIRR…KNHATVAIVT (150 aa)) enclose the MGS-like domain.

The protein belongs to the PurH family.

The enzyme catalyses (6R)-10-formyltetrahydrofolate + 5-amino-1-(5-phospho-beta-D-ribosyl)imidazole-4-carboxamide = 5-formamido-1-(5-phospho-D-ribosyl)imidazole-4-carboxamide + (6S)-5,6,7,8-tetrahydrofolate. It catalyses the reaction IMP + H2O = 5-formamido-1-(5-phospho-D-ribosyl)imidazole-4-carboxamide. Its pathway is purine metabolism; IMP biosynthesis via de novo pathway; 5-formamido-1-(5-phospho-D-ribosyl)imidazole-4-carboxamide from 5-amino-1-(5-phospho-D-ribosyl)imidazole-4-carboxamide (10-formyl THF route): step 1/1. It functions in the pathway purine metabolism; IMP biosynthesis via de novo pathway; IMP from 5-formamido-1-(5-phospho-D-ribosyl)imidazole-4-carboxamide: step 1/1. This chain is Bifunctional purine biosynthesis protein PurH, found in Bifidobacterium longum (strain DJO10A).